The chain runs to 202 residues: Orotate phosphoribosyltransferase (202 aa).

Residues Lys93 and 113-121 (EDIITTGGS) each bind 5-phospho-alpha-D-ribose 1-diphosphate. Thr117 and Arg145 together coordinate orotate.

The protein belongs to the purine/pyrimidine phosphoribosyltransferase family. PyrE subfamily. As to quaternary structure, homodimer. The cofactor is Mg(2+).

It carries out the reaction orotidine 5'-phosphate + diphosphate = orotate + 5-phospho-alpha-D-ribose 1-diphosphate. It functions in the pathway pyrimidine metabolism; UMP biosynthesis via de novo pathway; UMP from orotate: step 1/2. Functionally, catalyzes the transfer of a ribosyl phosphate group from 5-phosphoribose 1-diphosphate to orotate, leading to the formation of orotidine monophosphate (OMP). This is Orotate phosphoribosyltransferase from Campylobacter jejuni subsp. jejuni serotype O:23/36 (strain 81-176).